A 381-amino-acid chain; its full sequence is Sulfate adenylyltransferase (381 aa).

It belongs to the sulfate adenylyltransferase family.

It catalyses the reaction sulfate + ATP + H(+) = adenosine 5'-phosphosulfate + diphosphate. It functions in the pathway sulfur metabolism; hydrogen sulfide biosynthesis; sulfite from sulfate: step 1/3. This is Sulfate adenylyltransferase from Chloroflexus aurantiacus (strain ATCC 29366 / DSM 635 / J-10-fl).